The chain runs to 241 residues: DNA repair protein RecO (241 aa).

This sequence belongs to the RecO family.

Its function is as follows. Involved in DNA repair and RecF pathway recombination. The protein is DNA repair protein RecO of Orientia tsutsugamushi (strain Boryong) (Rickettsia tsutsugamushi).